We begin with the raw amino-acid sequence, 420 residues long: UDP-N-acetylglucosamine 1-carboxyvinyltransferase (420 aa).

22–23 (KN) lines the phosphoenolpyruvate pocket. Arg-93 is a UDP-N-acetyl-alpha-D-glucosamine binding site. Cys-117 serves as the catalytic Proton donor. Residue Cys-117 is modified to 2-(S-cysteinyl)pyruvic acid O-phosphothioketal. UDP-N-acetyl-alpha-D-glucosamine-binding residues include Asp-307 and Ile-329.

It belongs to the EPSP synthase family. MurA subfamily.

The protein resides in the cytoplasm. It catalyses the reaction phosphoenolpyruvate + UDP-N-acetyl-alpha-D-glucosamine = UDP-N-acetyl-3-O-(1-carboxyvinyl)-alpha-D-glucosamine + phosphate. It functions in the pathway cell wall biogenesis; peptidoglycan biosynthesis. Its function is as follows. Cell wall formation. Adds enolpyruvyl to UDP-N-acetylglucosamine. This Alcanivorax borkumensis (strain ATCC 700651 / DSM 11573 / NCIMB 13689 / SK2) protein is UDP-N-acetylglucosamine 1-carboxyvinyltransferase.